Reading from the N-terminus, the 601-residue chain is Threonine dehydratase (601 aa).

The N-terminal 51 residues, 1 to 51, are a transit peptide targeting the chloroplast; sequence MEVLCQAPAGNSNFACNPKFTAIRTRAISSNDTFKVISSTGNNKKMKGAIR. ACT-like domains lie at 427–499 and 521–592; these read ALLA…NLTN and IFCQ…IESL.

Belongs to the serine/threonine dehydratase family. The cofactor is pyridoxal 5'-phosphate.

It is found in the plastid. The protein resides in the chloroplast. It catalyses the reaction L-threonine = 2-oxobutanoate + NH4(+). It functions in the pathway amino-acid biosynthesis; L-isoleucine biosynthesis; 2-oxobutanoate from L-threonine: step 1/1. Functionally, catalyzes the conversion of threonine to alpha-keto butyrate in isoleucine (Ile) biosynthesis. Required for JA-Ile biosynthesis, a signaling molecule involved in defense and resistance to the herbivore Manduca sexta caterpillars. The polypeptide is Threonine dehydratase (Nicotiana attenuata (Coyote tobacco)).